The sequence spans 237 residues: MTPQEFYQLLSQQGIELTDRQKDQFERYFELLVEWNEKINLTAITEKNEVYLKHFYDSIAPVLQGLIDNQDHKLLDIGAGAGFPSLPMKIIYPQLDVTIIDSLNKRINFLKLLAEELGLDKVHFYHGRAEDFAQDKAFRAQFDLVTARAVARMQVLSELTIPYLKVGGKLLALKASNAPEELEEAKNALNLLFSKVQDNLSYALPNGDPRFITVVEKKKETPNKYPRKAGMPNKRPL.

S-adenosyl-L-methionine contacts are provided by residues Gly78, Phe83, 129–130 (AE), and Arg148. The tract at residues 218-237 (KKETPNKYPRKAGMPNKRPL) is disordered.

The protein belongs to the methyltransferase superfamily. RNA methyltransferase RsmG family.

Its subcellular location is the cytoplasm. Specifically methylates the N7 position of a guanine in 16S rRNA. This is Ribosomal RNA small subunit methyltransferase G from Streptococcus gordonii (strain Challis / ATCC 35105 / BCRC 15272 / CH1 / DL1 / V288).